The following is a 124-amino-acid chain: MAKFTVCLLLCLLLAAFVGAFGSELSDSHKTTLVNEIAEKMLQRKILDGVEATLVTDVAEKMFLRKMKAEAKTSETADQVFLKQLQLKGLPVCGETCVGGTCNTPGCTCSWPVCTRNGLPSLAA.

The N-terminal stretch at 1-22 is a signal peptide; that stretch reads MAKFTVCLLLCLLLAAFVGAFG. Positions 23–88 are excised as a propeptide; the sequence is SELSDSHKTT…QVFLKQLQLK (66 aa). Positions 89 to 117 form a cross-link, cyclopeptide (Gly-Asn); the sequence is GLPVCGETCVGGTCNTPGCTCSWPVCTRN. 3 cysteine pairs are disulfide-bonded: Cys93/Cys107, Cys97/Cys109, and Cys102/Cys114. A propeptide spanning residues 118 to 124 is cleaved from the precursor; it reads GLPSLAA.

It belongs to the cyclotide family. Moebius subfamily. Post-translationally, kalata-B1 is a cyclic peptide which occurs in three forms: with unmodified Trp-111, with Trp-111 oxidized to form oxindolylalanine and with Trp-111 oxidized to form N-formylkynurenine. Oxidation is enhanced by exposure to sunlight. Leaves and stems. Lower in roots.

In terms of biological role, probably participates in a plant defense mechanism. Has antibiotic activity. Has a diuretic effect. Has a uterotonic effect in humans. Active against the Gram-positive S.aureus with a minimum inhibition concentration of approximately 0.2 microM. Relatively ineffective against Gram-negative bacteria such as E.coli and P.aeruginosa. Inhibitory effect on the growth and development of larvae from H.punctigera. The unmodified form has hemolytic activity, the oxidized form lacks hemolytic activity. If the protein is linearized, hemolytic activity is lost. This chain is Kalata-B1 (OAK1), found in Oldenlandia affinis.